We begin with the raw amino-acid sequence, 159 residues long: uncharacterized protein (159 aa).

3 helical membrane passes run 16–36, 84–104, and 112–132; these read IVLP…AFIF, VYAG…LLII, and VFFY…LLPV.

The protein localises to the cell membrane. This is an uncharacterized protein from Bacillus subtilis (strain 168).